Here is a 121-residue protein sequence, read N- to C-terminus: Large ribosomal subunit protein uL14 (121 aa).

Belongs to the universal ribosomal protein uL14 family. Part of the 50S ribosomal subunit. Forms a cluster with proteins L3 and L19. In the 70S ribosome, L14 and L19 interact and together make contacts with the 16S rRNA in bridges B5 and B8.

Functionally, binds to 23S rRNA. Forms part of two intersubunit bridges in the 70S ribosome. The chain is Large ribosomal subunit protein uL14 from Mycoplasmopsis synoviae (strain 53) (Mycoplasma synoviae).